The following is a 354-amino-acid chain: Annexin A13 (354 aa).

Annexin repeat units lie at residues 26 to 97, 98 to 177, 203 to 275, and 279 to 350; these read NDPN…MLLT, DTDK…ALLQ, NLVE…LTLN, and NRPK…ALIG. Residues M39, G41, G43, T44, E46, E83, M111, G113, G115, E118, D163, D265, M292, G294, L295, G296, and E336 each coordinate Ca(2+).

It belongs to the annexin family. Homodimer.

It localises to the tegument. The protein resides in the secreted. It is found in the extracellular exosome. The protein localises to the host cell. Involved in reproduction of the worm. Involved in host-parasite interaction. Delivered into the host cell by means of parasite exosomes. Binds to acidic phospholipid membranes in a calcium-dependent manner in vitro. Causes aggregation of liposomes in the presence of calcium, but not in its absence. Likely to promote membrane fusion. May provide structural integrity within the tegument. The sequence is that of Annexin A13 from Schistosoma japonicum (Blood fluke).